The sequence spans 101 residues: uncharacterized protein (101 aa).

This is an uncharacterized protein from Acanthamoeba polyphaga mimivirus (APMV).